Reading from the N-terminus, the 475-residue chain is Ribulose bisphosphate carboxylase large chain (475 aa).

Substrate-binding residues include asparagine 123 and threonine 173. The Proton acceptor role is filled by lysine 175. Residue lysine 177 coordinates substrate. The Mg(2+) site is built by lysine 201, aspartate 203, and glutamate 204. An N6-carboxylysine modification is found at lysine 201. Histidine 294 (proton acceptor) is an active-site residue. Positions 295, 327, and 379 each coordinate substrate.

This sequence belongs to the RuBisCO large chain family. Type I subfamily. In terms of assembly, heterohexadecamer of 8 large chains and 8 small chains. Requires Mg(2+) as cofactor.

Its subcellular location is the plastid. The protein resides in the chloroplast. It carries out the reaction 2 (2R)-3-phosphoglycerate + 2 H(+) = D-ribulose 1,5-bisphosphate + CO2 + H2O. The enzyme catalyses D-ribulose 1,5-bisphosphate + O2 = 2-phosphoglycolate + (2R)-3-phosphoglycerate + 2 H(+). Functionally, ruBisCO catalyzes two reactions: the carboxylation of D-ribulose 1,5-bisphosphate, the primary event in carbon dioxide fixation, as well as the oxidative fragmentation of the pentose substrate in the photorespiration process. Both reactions occur simultaneously and in competition at the same active site. The chain is Ribulose bisphosphate carboxylase large chain from Bigelowiella natans (Pedinomonas minutissima).